The chain runs to 274 residues: Large ribosomal subunit protein uL2 (274 aa).

The tract at residues 221 to 256 (RGTAMNPVDHPHGGGEGRNFGKHPVTPWGVPTKGYK) is disordered.

It belongs to the universal ribosomal protein uL2 family. Part of the 50S ribosomal subunit. Forms a bridge to the 30S subunit in the 70S ribosome.

Its function is as follows. One of the primary rRNA binding proteins. Required for association of the 30S and 50S subunits to form the 70S ribosome, for tRNA binding and peptide bond formation. It has been suggested to have peptidyltransferase activity; this is somewhat controversial. Makes several contacts with the 16S rRNA in the 70S ribosome. The sequence is that of Large ribosomal subunit protein uL2 from Thioalkalivibrio sulfidiphilus (strain HL-EbGR7).